A 156-amino-acid chain; its full sequence is Ribosomal RNA large subunit methyltransferase H (156 aa).

S-adenosyl-L-methionine is bound by residues leucine 73, glycine 104, and isoleucine 123 to leucine 128.

It belongs to the RNA methyltransferase RlmH family. As to quaternary structure, homodimer.

The protein resides in the cytoplasm. It catalyses the reaction pseudouridine(1915) in 23S rRNA + S-adenosyl-L-methionine = N(3)-methylpseudouridine(1915) in 23S rRNA + S-adenosyl-L-homocysteine + H(+). Specifically methylates the pseudouridine at position 1915 (m3Psi1915) in 23S rRNA. The protein is Ribosomal RNA large subunit methyltransferase H of Janthinobacterium sp. (strain Marseille) (Minibacterium massiliensis).